A 274-amino-acid polypeptide reads, in one-letter code: uncharacterized protein (274 aa).

This sequence belongs to the class IV-like SAM-binding methyltransferase superfamily. RNA methyltransferase TrmH family.

This is an uncharacterized protein from Synechocystis sp. (strain ATCC 27184 / PCC 6803 / Kazusa).